The primary structure comprises 250 residues: tRNA (guanine-N(1)-)-methyltransferase (250 aa).

Residues G116 and 136 to 141 (IGDYVL) contribute to the S-adenosyl-L-methionine site.

The protein belongs to the RNA methyltransferase TrmD family. Homodimer.

It localises to the cytoplasm. The enzyme catalyses guanosine(37) in tRNA + S-adenosyl-L-methionine = N(1)-methylguanosine(37) in tRNA + S-adenosyl-L-homocysteine + H(+). Its function is as follows. Specifically methylates guanosine-37 in various tRNAs. This chain is tRNA (guanine-N(1)-)-methyltransferase, found in Pseudomonas putida (strain ATCC 700007 / DSM 6899 / JCM 31910 / BCRC 17059 / LMG 24140 / F1).